Here is a 261-residue protein sequence, read N- to C-terminus: 3-methyl-2-oxobutanoate hydroxymethyltransferase (261 aa).

Mg(2+) contacts are provided by Asp42 and Asp81. 3-methyl-2-oxobutanoate-binding positions include 42–43 (DS), Asp81, and Lys110. A Mg(2+)-binding site is contributed by Glu112. Catalysis depends on Glu179, which acts as the Proton acceptor.

It belongs to the PanB family. As to quaternary structure, homodecamer; pentamer of dimers. Requires Mg(2+) as cofactor.

It localises to the cytoplasm. It catalyses the reaction 3-methyl-2-oxobutanoate + (6R)-5,10-methylene-5,6,7,8-tetrahydrofolate + H2O = 2-dehydropantoate + (6S)-5,6,7,8-tetrahydrofolate. The protein operates within cofactor biosynthesis; (R)-pantothenate biosynthesis; (R)-pantoate from 3-methyl-2-oxobutanoate: step 1/2. In terms of biological role, catalyzes the reversible reaction in which hydroxymethyl group from 5,10-methylenetetrahydrofolate is transferred onto alpha-ketoisovalerate to form ketopantoate. The sequence is that of 3-methyl-2-oxobutanoate hydroxymethyltransferase from Thermus thermophilus (strain ATCC 27634 / DSM 579 / HB8).